The chain runs to 313 residues: Meiotically up-regulated gene 100 protein, mitochondrial (313 aa).

2 helical membrane passes run 147–167 (VFDY…YTAG) and 178–198 (SGFI…TLTF).

Its subcellular location is the mitochondrion inner membrane. Functionally, has a role in meiosis. The sequence is that of Meiotically up-regulated gene 100 protein, mitochondrial (mug100) from Schizosaccharomyces pombe (strain 972 / ATCC 24843) (Fission yeast).